Here is a 485-residue protein sequence, read N- to C-terminus: Probable cobyric acid synthase (485 aa).

The 186-residue stretch at 250 to 435 (EVEIAVIRLP…LHGLFDNENI (186 aa)) folds into the GATase cobBQ-type domain. Cys-328 (nucleophile) is an active-site residue. His-427 is an active-site residue.

This sequence belongs to the CobB/CobQ family. CobQ subfamily.

It participates in cofactor biosynthesis; adenosylcobalamin biosynthesis. Catalyzes amidations at positions B, D, E, and G on adenosylcobyrinic A,C-diamide. NH(2) groups are provided by glutamine, and one molecule of ATP is hydrogenolyzed for each amidation. The chain is Probable cobyric acid synthase from Methanosarcina acetivorans (strain ATCC 35395 / DSM 2834 / JCM 12185 / C2A).